The chain runs to 206 residues: Small ribosomal subunit protein uS4 (206 aa).

The disordered stretch occupies residues 18–45 (NIWGRPKSPVNRREYGPGQHGQRRKGKM). The region spanning 94–157 (RRLDAVVYRA…KQLASVLEAV (64 aa)) is the S4 RNA-binding domain.

This sequence belongs to the universal ribosomal protein uS4 family. Part of the 30S ribosomal subunit. Contacts protein S5. The interaction surface between S4 and S5 is involved in control of translational fidelity.

Functionally, one of the primary rRNA binding proteins, it binds directly to 16S rRNA where it nucleates assembly of the body of the 30S subunit. In terms of biological role, with S5 and S12 plays an important role in translational accuracy. This is Small ribosomal subunit protein uS4 from Ruegeria pomeroyi (strain ATCC 700808 / DSM 15171 / DSS-3) (Silicibacter pomeroyi).